We begin with the raw amino-acid sequence, 85 residues long: MAHKKGASSTRNGRDSNAQRLGVKRFGGQAVNAGEILVRQRGTHFHPGTGVGRGGDDTLFALAAGAVQFGTHRGRKVVNIVPLAV.

Residues 1 to 22 (MAHKKGASSTRNGRDSNAQRLG) are disordered. The segment covering 7 to 19 (ASSTRNGRDSNAQ) has biased composition (polar residues).

It belongs to the bacterial ribosomal protein bL27 family.

This chain is Large ribosomal subunit protein bL27 (rpmA), found in Streptomyces griseus.